Reading from the N-terminus, the 521-residue chain is Apolipoprotein N-acyltransferase (521 aa).

The next 6 membrane-spanning stretches (helical) occupy residues 27-47 (VLLA…IAFA), 64-84 (LGFV…TIVV), 93-113 (IVSV…PAVV), 125-145 (ISLL…RAFL), 167-187 (IADI…NVVL), and 202-222 (YPVK…AYGF). Residues 239-483 (IQGNIDQNIK…EAVLNGEVRL (245 aa)) enclose the CN hydrolase domain. Residue Glu281 is the Proton acceptor of the active site. Lys344 is an active-site residue. The active-site Nucleophile is Cys394. A helical membrane pass occupies residues 493–513 (YGDVFAWACVAGAAVVAALAF).

Belongs to the CN hydrolase family. Apolipoprotein N-acyltransferase subfamily.

Its subcellular location is the cell inner membrane. It catalyses the reaction N-terminal S-1,2-diacyl-sn-glyceryl-L-cysteinyl-[lipoprotein] + a glycerophospholipid = N-acyl-S-1,2-diacyl-sn-glyceryl-L-cysteinyl-[lipoprotein] + a 2-acyl-sn-glycero-3-phospholipid + H(+). It participates in protein modification; lipoprotein biosynthesis (N-acyl transfer). In terms of biological role, catalyzes the phospholipid dependent N-acylation of the N-terminal cysteine of apolipoprotein, the last step in lipoprotein maturation. The chain is Apolipoprotein N-acyltransferase from Geobacter metallireducens (strain ATCC 53774 / DSM 7210 / GS-15).